The chain runs to 162 residues: SCF ubiquitin ligase complex protein SKP1b (162 aa).

S2 is subject to N-acetylserine. Positions 100–162 (ILAANYLDIK…NEWCEDKGGN (63 aa)) are interaction with the F-box domain of F-box proteins. P143 carries the 4-hydroxyproline modification. The O-linked (GlcNAc...) hydroxyproline glycan is linked to P143.

This sequence belongs to the SKP1 family. As to quaternary structure, multiprotein complex (SCF) with cullin and F-box-containing protein. Capable of undergoing aggregation. Post-translationally, O-linked glycan consists of linear Gal-Gal-Fuc-Gal-GlcNAc. In terms of processing, not glycosylated in prespore cells. FpaA and fpaB seem to be identically glycosylated. Glycosylation is required for nuclear enrichment. Post-translationally, hydroxylated by phyA.

Its subcellular location is the cytoplasm. It localises to the nucleus. The protein is SCF ubiquitin ligase complex protein SKP1b (fpaB-1) of Dictyostelium discoideum (Social amoeba).